We begin with the raw amino-acid sequence, 319 residues long: 33 kDa chaperonin (319 aa).

Over residues 1 to 10 the composition is skewed to basic and acidic residues; the sequence is MTDASGSERL. Positions 1-25 are disordered; sequence MTDASGSERLKRAKGISEGTPSSLP. Intrachain disulfides connect cysteine 261–cysteine 263 and cysteine 294–cysteine 297.

The protein belongs to the HSP33 family. Post-translationally, under oxidizing conditions two disulfide bonds are formed involving the reactive cysteines. Under reducing conditions zinc is bound to the reactive cysteines and the protein is inactive.

The protein resides in the cytoplasm. Its function is as follows. Redox regulated molecular chaperone. Protects both thermally unfolding and oxidatively damaged proteins from irreversible aggregation. Plays an important role in the bacterial defense system toward oxidative stress. This Synechococcus sp. (strain JA-2-3B'a(2-13)) (Cyanobacteria bacterium Yellowstone B-Prime) protein is 33 kDa chaperonin.